A 351-amino-acid polypeptide reads, in one-letter code: Biotin synthase (351 aa).

The 218-residue stretch at 48-265 (NKVRIHILDN…LCMFRLINPD (218 aa)) folds into the Radical SAM core domain. [4Fe-4S] cluster-binding residues include Cys63, Cys67, and Cys70. Residues Cys107, Cys139, Cys199, and Arg269 each contribute to the [2Fe-2S] cluster site.

Belongs to the radical SAM superfamily. Biotin synthase family. In terms of assembly, homodimer. [4Fe-4S] cluster is required as a cofactor. The cofactor is [2Fe-2S] cluster.

It carries out the reaction (4R,5S)-dethiobiotin + (sulfur carrier)-SH + 2 reduced [2Fe-2S]-[ferredoxin] + 2 S-adenosyl-L-methionine = (sulfur carrier)-H + biotin + 2 5'-deoxyadenosine + 2 L-methionine + 2 oxidized [2Fe-2S]-[ferredoxin]. It participates in cofactor biosynthesis; biotin biosynthesis; biotin from 7,8-diaminononanoate: step 2/2. In terms of biological role, catalyzes the conversion of dethiobiotin (DTB) to biotin by the insertion of a sulfur atom into dethiobiotin via a radical-based mechanism. This is Biotin synthase from Leptospira interrogans serogroup Icterohaemorrhagiae serovar Lai (strain 56601).